The following is a 462-amino-acid chain: GTPase Der (462 aa).

EngA-type G domains lie at 9–171 (KTIA…GLTK) and 201–372 (IQVG…ECFS). Residues 15–22 (GQPNVGKS), 62–66 (DTGGM), 123–126 (NKID), 207–214 (GRVNVGKS), 254–258 (DTAGI), and 318–321 (NKWD) each bind GTP. The region spanning 373-457 (KRIPTSLLNS…PLIINAKDKK (85 aa)) is the KH-like domain.

It belongs to the TRAFAC class TrmE-Era-EngA-EngB-Septin-like GTPase superfamily. EngA (Der) GTPase family. As to quaternary structure, associates with the 50S ribosomal subunit.

In terms of biological role, GTPase that plays an essential role in the late steps of ribosome biogenesis. This is GTPase Der from Helicobacter acinonychis (strain Sheeba).